Reading from the N-terminus, the 168-residue chain is Photosystem I assembly protein Ycf3 (168 aa).

3 TPR repeats span residues 35-68, 72-105, and 120-153; these read AFTYYRDGMSAQSEGNYAEALQNYYEAMRLEIDP, SYILYNIGLIHTSNGEHTKALEYYFRALERNPFL, and GEQAIRQGDSEIAEAWFDQAAEYWKQAISLTPGN.

This sequence belongs to the Ycf3 family.

It is found in the plastid. The protein resides in the chloroplast thylakoid membrane. Essential for the assembly of the photosystem I (PSI) complex. May act as a chaperone-like factor to guide the assembly of the PSI subunits. The polypeptide is Photosystem I assembly protein Ycf3 (Coffea arabica (Arabian coffee)).